The following is a 244-amino-acid chain: 5-oxoprolinase subunit A (244 aa).

It belongs to the LamB/PxpA family. In terms of assembly, forms a complex composed of PxpA, PxpB and PxpC.

It catalyses the reaction 5-oxo-L-proline + ATP + 2 H2O = L-glutamate + ADP + phosphate + H(+). Functionally, catalyzes the cleavage of 5-oxoproline to form L-glutamate coupled to the hydrolysis of ATP to ADP and inorganic phosphate. The sequence is that of 5-oxoprolinase subunit A from Shigella sonnei (strain Ss046).